The primary structure comprises 325 residues: Tetraacyldisaccharide 4'-kinase (325 aa).

55 to 62 lines the ATP pocket; it reads TAGGNGKT.

Belongs to the LpxK family.

It carries out the reaction a lipid A disaccharide + ATP = a lipid IVA + ADP + H(+). It functions in the pathway glycolipid biosynthesis; lipid IV(A) biosynthesis; lipid IV(A) from (3R)-3-hydroxytetradecanoyl-[acyl-carrier-protein] and UDP-N-acetyl-alpha-D-glucosamine: step 6/6. In terms of biological role, transfers the gamma-phosphate of ATP to the 4'-position of a tetraacyldisaccharide 1-phosphate intermediate (termed DS-1-P) to form tetraacyldisaccharide 1,4'-bis-phosphate (lipid IVA). The protein is Tetraacyldisaccharide 4'-kinase of Citrobacter koseri (strain ATCC BAA-895 / CDC 4225-83 / SGSC4696).